Consider the following 540-residue polypeptide: Probable ATP-dependent RNA helicase DDX28 (540 aa).

The Mitochondrial targeting signal signature appears at 3 to 18; sequence LTRPVRLFSLVTRLLL. A Q motif motif is present at residues 126 to 156; the sequence is GSFADLGLEPRVLHALQEAAPEVVQPTTVQS. One can recognise a Helicase ATP-binding domain in the interval 159–351; it reads IPSLLRGRHV…NKVASPDAVT (193 aa). 172-179 contacts ATP; the sequence is AETGSGKT. A Nuclear export signal motif is present at residues 180–191; the sequence is LSYLLPLLQRLL. Residues 286-289 carry the DEAD motif; that stretch reads DEAD. A Helicase C-terminal domain is found at 377 to 536; the sequence is KVAELVHILK…GLASSVKEPL (160 aa). Positions 520 to 523 match the Nuclear localization signal motif; that stretch reads RRRR.

This sequence belongs to the DEAD box helicase family. Monomer. Found in a complex with GRSF1, DHX30, FASTKD2 and FASTKD5. Associates with the 16S mitochondrial rRNA (16S mt-rRNA) and with the mitochondrial ribosome large subunit (39S). Expressed in all tissues tested, including brain, placenta, lung, liver, skeletal muscle, kidney, pancreas, leukocytes, colon, small intestine, ovary and prostate.

The protein localises to the nucleus. Its subcellular location is the mitochondrion. It localises to the mitochondrion matrix. It is found in the mitochondrion nucleoid. It catalyses the reaction ATP + H2O = ADP + phosphate + H(+). Plays an essential role in facilitating the proper assembly of the mitochondrial large ribosomal subunit and its helicase activity is essential for this function. May be involved in RNA processing or transport. Has RNA and Mg(2+)-dependent ATPase activity. This is Probable ATP-dependent RNA helicase DDX28 (DDX28) from Homo sapiens (Human).